Reading from the N-terminus, the 856-residue chain is Translation initiation factor IF-2 (856 aa).

The region spanning 356-526 is the tr-type G domain; it reads PRAPVVTVMG…LLIADLLELK (171 aa). Residues 365-372 form a G1 region; sequence GHVDHGKT. 365-372 lines the GTP pocket; that stretch reads GHVDHGKT. Positions 390-394 are G2; it reads GITQH. The interval 412 to 415 is G3; the sequence is DTPG. Residues 412–416 and 466–469 contribute to the GTP site; these read DTPGH and NKID. A G4 region spans residues 466–469; sequence NKID. The tract at residues 502–504 is G5; it reads SAK.

This sequence belongs to the TRAFAC class translation factor GTPase superfamily. Classic translation factor GTPase family. IF-2 subfamily.

The protein resides in the cytoplasm. One of the essential components for the initiation of protein synthesis. Protects formylmethionyl-tRNA from spontaneous hydrolysis and promotes its binding to the 30S ribosomal subunits. Also involved in the hydrolysis of GTP during the formation of the 70S ribosomal complex. The chain is Translation initiation factor IF-2 from Ehrlichia ruminantium (strain Welgevonden).